A 194-amino-acid chain; its full sequence is dCTP deaminase, dUMP-forming (194 aa).

DCTP is bound by residues 104–109, aspartate 122, 130–132, glutamine 151, tyrosine 165, lysine 172, and glutamine 176; these read RSSLGR and TLE. Glutamate 132 functions as the Proton donor/acceptor in the catalytic mechanism.

The protein belongs to the dCTP deaminase family. Homotrimer.

The enzyme catalyses dCTP + 2 H2O = dUMP + NH4(+) + diphosphate. Its pathway is pyrimidine metabolism; dUMP biosynthesis; dUMP from dCTP: step 1/1. Functionally, bifunctional enzyme that catalyzes both the deamination of dCTP to dUTP and the hydrolysis of dUTP to dUMP without releasing the toxic dUTP intermediate. This Dictyoglomus thermophilum (strain ATCC 35947 / DSM 3960 / H-6-12) protein is dCTP deaminase, dUMP-forming.